Reading from the N-terminus, the 635-residue chain is CCR4-NOT transcription complex subunit 10 (635 aa).

Phosphothreonine is present on T45. The stretch at 131–165 (LVARLEALEKAMAALVATLQLQLLLATNQLNRAEA) forms a coiled coil. Disordered stretches follow at residues 396–416 (EERQ…QSAG) and 450–474 (SEDV…DNNF). A compositionally biased stretch (basic and acidic residues) spans 456-470 (PEPKDPTQESWRHPQ).

Belongs to the CNOT10 family. In terms of assembly, component of the CCR4-NOT complex. CNOT10 and CNOT11 form a subcomplex docked to the CNOT1 scaffold.

Its subcellular location is the cytoplasm. It is found in the nucleus. In terms of biological role, component of the CCR4-NOT complex which is one of the major cellular mRNA deadenylases and is linked to various cellular processes including bulk mRNA degradation, miRNA-mediated repression, translational repression during translational initiation and general transcription regulation. Additional complex functions may be a consequence of its influence on mRNA expression. Is not required for association of CNOT7 to the CCR4-NOT complex. This is CCR4-NOT transcription complex subunit 10 (Not10) from Drosophila melanogaster (Fruit fly).